Consider the following 303-residue polypeptide: Probable cell division protein WhiA (303 aa).

The segment at residues 272–303 (SIQQIADSLAVPLTKSGVNHRLRKINKIAEDL) is a DNA-binding region (H-T-H motif).

It belongs to the WhiA family.

In terms of biological role, involved in cell division and chromosome segregation. This chain is Probable cell division protein WhiA, found in Streptococcus mutans serotype c (strain ATCC 700610 / UA159).